Here is a 182-residue protein sequence, read N- to C-terminus: Lipoprotein signal peptidase (182 aa).

The next 4 membrane-spanning stretches (helical) occupy residues 15–35 (LYIG…FLVI), 44–64 (LEVL…FVFG), 65–85 (AFQD…VFLI), and 97–117 (PWGW…KFFV). Residues Asp140 and Asp162 contribute to the active site. Residues 155 to 175 (WPAFNVADSCVTIGLTILIFT) form a helical membrane-spanning segment.

Belongs to the peptidase A8 family.

It localises to the cell inner membrane. It catalyses the reaction Release of signal peptides from bacterial membrane prolipoproteins. Hydrolyzes -Xaa-Yaa-Zaa-|-(S,diacylglyceryl)Cys-, in which Xaa is hydrophobic (preferably Leu), and Yaa (Ala or Ser) and Zaa (Gly or Ala) have small, neutral side chains.. Its pathway is protein modification; lipoprotein biosynthesis (signal peptide cleavage). This protein specifically catalyzes the removal of signal peptides from prolipoproteins. The sequence is that of Lipoprotein signal peptidase from Leptospira borgpetersenii serovar Hardjo-bovis (strain L550).